Here is a 671-residue protein sequence, read N- to C-terminus: cGMP-dependent protein kinase 1 (671 aa).

Residue Ser-2 is modified to N-acetylserine. A coiled-coil region spans residues 2–59; sequence SELEEDFAKILMLKEERIKELEKRLSEKEEEIQELKRKLHKCQSVLPVPSTHIGPRTT. The interval 2–102 is required for dimerization; the sequence is SELEEDFAKI…LIKEAILDND (101 aa). Positions 9–44 are leucine-zipper; that stretch reads AKILMLKEERIKELEKRLSEKEEEIQELKRKLHKCQ. Residues 50–75 form an autoinhibitory domain region; it reads PSTHIGPRTTRAQGISAEPQTYRSFH. Thr-59 is subject to Phosphothreonine; by autocatalysis. The interval 103–220 is cGMP-binding, high affinity; that stretch reads FMKNLELSQI…EYMEFLKSVP (118 aa). Residues 167-170 and 177-178 each bind 3',5'-cyclic AMP; these read GELA and RT. Residues 167–170, 177–178, Arg-282, 291–294, 301–302, and Tyr-336 each bind 3',5'-cyclic GMP; these read GELA, RT, and GEKA. Residues 221-341 are cGMP-binding, low affinity; the sequence is TFQSLPEEIL…SNKAYEDAEA (121 aa). The region spanning 360 to 619 is the Protein kinase domain; sequence FNIIDTLGVG…VKDIQKHKWF (260 aa). Residues 366-374 and Lys-390 each bind ATP; that span reads LGVGGFGRV. The Proton acceptor role is filled by Asp-484. At Thr-515 the chain carries Phosphothreonine. Residues 620–671 form the AGC-kinase C-terminal domain; it reads EGFNWEGLRKGTLTPPIIPSVASPTDTSNFDSFPEDNDEPPPDDNSGWDIDF. A disordered region spans residues 635–671; sequence PIIPSVASPTDTSNFDSFPEDNDEPPPDDNSGWDIDF. A compositionally biased stretch (acidic residues) spans 652-661; that stretch reads FPEDNDEPPP.

Belongs to the protein kinase superfamily. AGC Ser/Thr protein kinase family. cGMP subfamily. As to quaternary structure, isoform alpha: parallel homodimer or heterodimer and also heterotetramer. Interacts directly with PPP1R12A. Non-covalent dimer of dimer of PRKG1-PRKG1 and PPP1R12A-PPP1R12A. This interaction targets PRKG1 to stress fibers to mediate smooth muscle cell relaxation and vasodilation in responses to rises in cGMP. Isoform beta: antiparallel homodimer. Part of cGMP kinase signaling complex at least composed of ACTA2/alpha-actin, CNN1/calponin H1, PLN/phospholamban, PRKG1 and ITPR1. Interacts with IRAG1. Forms a stable complex with ITPR1, IRAG1, and isoform beta of PRKG1. Interacts with TRPC7 (via ankyrin repeat domain). Isoform alpha interacts with RGS2. Interacts with GTF2I. In terms of processing, autophosphorylation increases kinase activity. Post-translationally, 65 kDa monomer is produced by proteolytic cleavage. High concentrations are detected in various smooth muscle: lung, rumen, trachea, aorta, uterus and stomach. Isoform alpha is expressed predominantly in heart, cerebellum and lung, whereas the beta isoform is expressed in high concentrations in trachea, aorta, stomach and uterus.

Its subcellular location is the cytoplasm. The enzyme catalyses L-seryl-[protein] + ATP = O-phospho-L-seryl-[protein] + ADP + H(+). The catalysed reaction is L-threonyl-[protein] + ATP = O-phospho-L-threonyl-[protein] + ADP + H(+). With respect to regulation, in the absence of cGMP, PRKG1 activity is suppressed by autoinhibitory contacts. Functionally, serine/threonine protein kinase that acts as a key mediator of the nitric oxide (NO)/cGMP signaling pathway. GMP binding activates PRKG1, which phosphorylates serines and threonines on many cellular proteins. Numerous protein targets for PRKG1 phosphorylation are implicated in modulating cellular calcium, but the contribution of each of these targets may vary substantially among cell types. Proteins that are phosphorylated by PRKG1 regulate platelet activation and adhesion, smooth muscle contraction, cardiac function, gene expression, feedback of the NO-signaling pathway, and other processes involved in several aspects of the CNS like axon guidance, hippocampal and cerebellar learning, circadian rhythm and nociception. Smooth muscle relaxation is mediated through lowering of intracellular free calcium, by desensitization of contractile proteins to calcium, and by decrease in the contractile state of smooth muscle or in platelet activation. Regulates intracellular calcium levels via several pathways: phosphorylates IRAG1 and inhibits IP3-induced Ca(2+) release from intracellular stores, phosphorylation of KCNMA1 (BKCa) channels decreases intracellular Ca(2+) levels, which leads to increased opening of this channel. PRKG1 phosphorylates the canonical transient receptor potential channel (TRPC) family which inactivates the associated inward calcium current. Another mode of action of NO/cGMP/PKGI signaling involves PKGI-mediated inactivation of the Ras homolog gene family member A (RhoA). Phosphorylation of RHOA by PRKG1 blocks the action of this protein in myriad processes: regulation of RHOA translocation; decreasing contraction; controlling vesicle trafficking, reduction of myosin light chain phosphorylation resulting in vasorelaxation. Activation of PRKG1 by NO signaling also alters gene expression in a number of tissues. In smooth muscle cells, increased cGMP and PRKG1 activity influence expression of smooth muscle-specific contractile proteins, levels of proteins in the NO/cGMP signaling pathway, down-regulation of the matrix proteins osteopontin and thrombospondin-1 to limit smooth muscle cell migration and phenotype. Regulates vasodilator-stimulated phosphoprotein (VASP) functions in platelets and smooth muscle. This Bos taurus (Bovine) protein is cGMP-dependent protein kinase 1 (PRKG1).